A 239-amino-acid polypeptide reads, in one-letter code: Probable transcriptional regulatory protein BLi00754/BL02339 (239 aa).

It belongs to the TACO1 family. YeeN subfamily.

The protein resides in the cytoplasm. This is Probable transcriptional regulatory protein BLi00754/BL02339 from Bacillus licheniformis (strain ATCC 14580 / DSM 13 / JCM 2505 / CCUG 7422 / NBRC 12200 / NCIMB 9375 / NCTC 10341 / NRRL NRS-1264 / Gibson 46).